The following is a 1273-amino-acid chain: Probable methionine synthase (1273 aa).

In terms of domain architecture, Hcy-binding spans 7 to 327 (FKELADIAKE…DHINAMYKAV (321 aa)). 3 residues coordinate Zn(2+): cysteine 249, cysteine 312, and cysteine 313. The Pterin-binding domain maps to 360-621 (FVNIGERCNV…IDKPLLQLLE (262 aa)). Positions 652–749 (KTDEWRNTSV…FMDAERQANI (98 aa)) constitute a B12-binding N-terminal domain. Residues glutamate 699, 772-776 (GDVHD), histidine 775, serine 820, threonine 824, and alanine 876 each bind methylcob(III)alamin. The region spanning 762-897 (QGTVVIATVK…DMTVRDAFLQ (136 aa)) is the B12-binding domain. An AdoMet activation domain is found at 927 to 1273 (SLKDRRFVAL…LSPIIGYELD (347 aa)). S-adenosyl-L-methionine-binding positions include aspartate 977, arginine 1171, and 1225–1226 (YF).

This sequence belongs to the vitamin-B12 dependent methionine synthase family. Methylcob(III)alamin serves as cofactor. It depends on Zn(2+) as a cofactor.

The catalysed reaction is (6S)-5-methyl-5,6,7,8-tetrahydrofolate + L-homocysteine = (6S)-5,6,7,8-tetrahydrofolate + L-methionine. Its pathway is amino-acid biosynthesis; L-methionine biosynthesis via de novo pathway; L-methionine from L-homocysteine (MetH route): step 1/1. Functionally, catalyzes the transfer of a methyl group from methyl-cobalamin to homocysteine, yielding enzyme-bound cob(I)alamin and methionine. Subsequently, remethylates the cofactor using methyltetrahydrofolate. In Caenorhabditis briggsae, this protein is Probable methionine synthase (metr-1).